Consider the following 498-residue polypeptide: Probable malate:quinone oxidoreductase 2 (498 aa).

It belongs to the MQO family. FAD is required as a cofactor.

It carries out the reaction (S)-malate + a quinone = a quinol + oxaloacetate. Its pathway is carbohydrate metabolism; tricarboxylic acid cycle; oxaloacetate from (S)-malate (quinone route): step 1/1. This chain is Probable malate:quinone oxidoreductase 2, found in Staphylococcus epidermidis (strain ATCC 12228 / FDA PCI 1200).